The following is a 294-amino-acid chain: Bifunctional protein FolD (294 aa).

NADP(+)-binding positions include 166–168, Ser191, and Ile232; that span reads GRS.

This sequence belongs to the tetrahydrofolate dehydrogenase/cyclohydrolase family. Homodimer.

The catalysed reaction is (6R)-5,10-methylene-5,6,7,8-tetrahydrofolate + NADP(+) = (6R)-5,10-methenyltetrahydrofolate + NADPH. It carries out the reaction (6R)-5,10-methenyltetrahydrofolate + H2O = (6R)-10-formyltetrahydrofolate + H(+). The protein operates within one-carbon metabolism; tetrahydrofolate interconversion. Catalyzes the oxidation of 5,10-methylenetetrahydrofolate to 5,10-methenyltetrahydrofolate and then the hydrolysis of 5,10-methenyltetrahydrofolate to 10-formyltetrahydrofolate. This is Bifunctional protein FolD from Nitrobacter winogradskyi (strain ATCC 25391 / DSM 10237 / CIP 104748 / NCIMB 11846 / Nb-255).